The sequence spans 204 residues: Probable peptidyl-tRNA hydrolase (204 aa).

His-36 functions as the Proton acceptor in the catalytic mechanism. TRNA is bound by residues Asn-86 and Asn-132.

This sequence belongs to the PTH family.

It carries out the reaction an N-acyl-L-alpha-aminoacyl-tRNA + H2O = an N-acyl-L-amino acid + a tRNA + H(+). Functionally, peptidyl-tRNA hydrolase that cleaves nascent chains-tRNAs that are not stably fixed in the P-site of 60S ribosome-nascent chain complexes. Acts downstream of the ribosome-associated quality control (RQC) pathway to release non-ubiquitinated nascent chains from 60S and 80S ribosome-nascent chain complexes. Does not act on ubiquitinated nascent chains, which are cleaved by ANKZF1 for degradation. This is Probable peptidyl-tRNA hydrolase from Mus musculus (Mouse).